Consider the following 415-residue polypeptide: Packaging protein 3 (415 aa).

The disordered stretch occupies residues 1–55 (MHPVLRQMRPPPQQRQEQEQRQTCRAPSPPPTASGGATSAVDAAADGDYEPPRRR). The segment at 1–173 (MHPVLRQMRP…VNQEINFQKS (173 aa)) is interaction with packaging protein 1. Phosphoserine; by host is present on residues S75 and S360. The span at 381–394 (GAGPGLAVAPARAG) shows a compositional bias: low complexity. The interval 381–415 (GAGPGLAVAPARAGNVGGVEEYDEDDEYEPEDGEY) is disordered. The segment covering 400 to 415 (EEYDEDDEYEPEDGEY) has biased composition (acidic residues).

The protein belongs to the adenoviridae packaging protein 3 family. Part of the genome packaging complex composed of packaging proteins 1, 2 and 3; this complex specifically binds to the packaging sequence on the left end of viral genomic DNA and performs packaging of the viral genome. Interacts with hexon-linking protein IIIa; this interaction is required to promote correct genome packaging. Cleaved at different sites by the viral protease during virion maturation.

It is found in the host nucleus. In terms of biological role, involved in viral genome packaging through its interaction with packaging proteins 1 and 2. After proteolytic cleavage by adenovirus protease, L1 52/55k protein is removed from the capsid during viral maturation. In Homo sapiens (Human), this protein is Packaging protein 3.